We begin with the raw amino-acid sequence, 156 residues long: Acyl carrier protein, mitochondrial (156 aa).

A mitochondrion-targeting transit peptide spans 1-68 (MASRVLSAYV…GRVTQLCRQY (68 aa)). A Carrier domain is found at 77–152 (EGIQDRVLYV…EIVDYIADKK (76 aa)). N6-acetyllysine is present on Lys-88. Ser-112 is subject to O-(pantetheine 4'-phosphoryl)serine.

The protein belongs to the acyl carrier protein (ACP) family. Mammalian complex I is composed of 45 different subunits. Interacts with ETFRF1. Identified in a complex composed of MALSU1, MIEF1 upstream open reading frame protein and NDUFAB1; within the trimeric complex, MIEF1 upstream open reading frame protein functions as a bridging scaffold that interacts with MALSU1 on one side, and with NDUFAB1 on the other side. The complex interacts with the mitochondrial large ribosomal subunit. Interacts with alpha-1-microglobulin chain; this interaction is required for the maintenance of mitochondrial redox homeostasis. Component of the mitochondrial core iron-sulfur cluster (ISC) complex composed of NFS1, LYRM4, NDUFAB1, ISCU, FXN, and FDX2; this complex is a heterohexamer containing two copies of each monomer. Component of the cyteine desulfurase complex composed of NFS1, LYRM4 and NDUFAB1; this complex contributes to the stability and cysteine desulfurase activity of NFS1. Phosphopantetheinylation at Ser-112 is essential for interactions with LYR motif-containing proteins.

It is found in the mitochondrion. Its function is as follows. Carrier of the growing fatty acid chain in fatty acid biosynthesis. Accessory and non-catalytic subunit of the mitochondrial membrane respiratory chain NADH dehydrogenase (Complex I), which functions in the transfer of electrons from NADH to the respiratory chain. Accessory protein, of the core iron-sulfur cluster (ISC) assembly complex, that regulates, in association with LYRM4, the stability and the cysteine desulfurase activity of NFS1 and participates in the [2Fe-2S] clusters assembly on the scaffolding protein ISCU. The core iron-sulfur cluster (ISC) assembly complex is involved in the de novo synthesis of a [2Fe-2S] cluster, the first step of the mitochondrial iron-sulfur protein biogenesis. This process is initiated by the cysteine desulfurase complex (NFS1:LYRM4:NDUFAB1) that produces persulfide which is delivered on the scaffold protein ISCU in a FXN-dependent manner. Then this complex is stabilized by FDX2 which provides reducing equivalents to accomplish the [2Fe-2S] cluster assembly. Finally, the [2Fe-2S] cluster is transferred from ISCU to chaperone proteins, including HSCB, HSPA9 and GLRX5. This chain is Acyl carrier protein, mitochondrial, found in Pongo pygmaeus (Bornean orangutan).